A 495-amino-acid polypeptide reads, in one-letter code: MAARAIMFQGTGSDVGKSLMVAGLARALTLRGLTVAPFKPQNMSNNAAVTADGGEIGRAQALQARAARRPMTVHMNPVLLKPQSEVGSQVVVQGRVIGNAKASAYQAMKPQLMAAVLESFHRLAADADIVLVEGAGSASEINLRAGDIANMGFAQATQTPVVIIGDIDRGGVIASLVGTKAVLAPDDAALVAGFLVNRFRGDPALFAAGMNEIAARTGWASLGLIPHFSDARRLPAEDALGLPGHGAAGGQRPKVVVLAYPRISNFDEFDPLRLEDGIDLQFLRPGTPIPGDAAVAILPGSKATIADLQALRETGWDIDLSAHLRRGGRVLGICGGYQMLGRKISDPDGHEGAPGSVAGLGLLDVETTLTDDKALREVHGALTEDQIPFRGYEMHIGRTDGPTARAPFLTFADGRSDGAVAREGQIAGCYVHGLFADDGLRAHWLGRLGAVTTGLAYESDVEATLDGLAAHLERHVNVSGILALARRPTPRPTAP.

The region spanning 252–440 (RPKVVVLAYP…VHGLFADDGL (189 aa)) is the GATase cobBQ-type domain. Catalysis depends on Cys334, which acts as the Nucleophile. His432 is a catalytic residue.

The protein belongs to the CobB/CobQ family. CobQ subfamily.

It participates in cofactor biosynthesis; adenosylcobalamin biosynthesis. Functionally, catalyzes amidations at positions B, D, E, and G on adenosylcobyrinic A,C-diamide. NH(2) groups are provided by glutamine, and one molecule of ATP is hydrogenolyzed for each amidation. In Bradyrhizobium sp. (strain ORS 278), this protein is Cobyric acid synthase.